Reading from the N-terminus, the 475-residue chain is Methylenomycin A resistance protein (475 aa).

The next 14 membrane-spanning stretches (helical) occupy residues 28–48 (ITALATGFVMATLDVTVVNVA), 65–85 (WIVDGYVLTFASLLMLAGGLA), 93–113 (VYLWGMGVFFLASLACALAPT), 123–143 (VQGAGAALFMPSSLSLLVFSF), 152–172 (MLGLWSAIVATSSGLGPTVGG), 173–193 (LMVSAFGWESIFLLNLPIGAI), 212–232 (LAVPGHLLWIVALAAVSFALI), 240–260 (TAGPVLTAYAVAVTAAALLAL), 285–305 (LVGFLFNFALFGSTFMLGLYF), 314–334 (FQAGLELLPMTIFFPVANIVY), 346–366 (LLTAFLLLAGAASLSMVTITA), 371–391 (WVVAVAVGVANIGAGIISPGM), 416–436 (QIGSLVGIAAMGVVLHSTSDW), and 439–459 (GAAISFLAVGLAYLLGGLSAW).

The protein belongs to the major facilitator superfamily.

It localises to the cell membrane. In terms of biological role, resistance to the epoxide antibiotic methylenomycin A; probably by mediating its efflux. In Streptomyces coelicolor (strain ATCC BAA-471 / A3(2) / M145), this protein is Methylenomycin A resistance protein (mmr).